A 213-amino-acid chain; its full sequence is Thymidylate kinase (213 aa).

7–14 is an ATP binding site; the sequence is GMDGSGKT.

Belongs to the thymidylate kinase family.

The enzyme catalyses dTMP + ATP = dTDP + ADP. Phosphorylation of dTMP to form dTDP in both de novo and salvage pathways of dTTP synthesis. The polypeptide is Thymidylate kinase (Mycoplasma capricolum subsp. capricolum (strain California kid / ATCC 27343 / NCTC 10154)).